Consider the following 355-residue polypeptide: Elongation factor Ts (355 aa).

The interval 82 to 85 (TDFV) is involved in Mg(2+) ion dislocation from EF-Tu.

The protein belongs to the EF-Ts family.

It is found in the cytoplasm. In terms of biological role, associates with the EF-Tu.GDP complex and induces the exchange of GDP to GTP. It remains bound to the aminoacyl-tRNA.EF-Tu.GTP complex up to the GTP hydrolysis stage on the ribosome. In Helicobacter pylori (strain HPAG1), this protein is Elongation factor Ts.